The sequence spans 260 residues: Sperm microtubule inner protein 6 (260 aa).

This sequence belongs to the SPMIP6 family. In terms of assembly, microtubule inner protein component of sperm flagellar doublet microtubules. Interacts with alpha-tubulin. As to expression, testis-specific, expressed exclusively in germ cells (at protein level). In terms of tissue distribution, testis-specific. Expressed in both lung and testis.

It localises to the cytoplasm. It is found in the cytoskeleton. Its subcellular location is the nucleus. The protein localises to the mitochondrion. The protein resides in the flagellum axoneme. Functionally, may participate in intramanchette transport and midpiece formation of the sperm tail. May play a potential role in somatic cell proliferation. The sequence is that of Sperm microtubule inner protein 6 (SPMIP6) from Mus musculus (Mouse).